The chain runs to 377 residues: Stimulator of interferon genes protein (377 aa).

Topologically, residues 1 to 21 are cytoplasmic; that stretch reads MRRAEENNGFGTIPKRRNQHT. Residues 22-42 traverse the membrane as a helical segment; the sequence is PFYASIGMIVVIIVAFTSYHI. Topologically, residues 43-57 are extracellular; sequence TSYGDDRNRAMRQYS. The helical transmembrane segment at 58 to 80 threads the bilayer; it reads FTFSLAYLAFLVGELLRRCCLFA. The Cytoplasmic portion of the chain corresponds to 81 to 101; that stretch reads EEYRHIETRYNGSLKKAIQTT. Residues 102–122 traverse the membrane as a helical segment; sequence FSFGHNNVLFVASLLFFVVFV. Topologically, residues 123-154 are extracellular; that stretch reads ASNDPNGSSSVIQGNSTAEPHTEMRQTSGWQG. Residues 155 to 175 traverse the membrane as a helical segment; the sequence is LWGQFIISALLTPLVVHLLGL. Residues 176–377 lie on the Cytoplasmic side of the membrane; it reads RELSKVEESQ…LKDSELEIGG (202 aa). 2',3'-cGAMP contacts are provided by residues Tyr206, Arg272, 278 to 279, and Thr303; that span reads RH. 3',3'-c-di-GMP contacts are provided by residues Tyr206, Arg272, Arg278, and 300–303; that span reads EYAT.

The protein belongs to the TMEM173 family. In terms of assembly, homodimer.

The protein resides in the endoplasmic reticulum membrane. Sensor of cytosolic DNA from bacteria and viruses that promotes autophagy. Acts by recognizing and binding cyclic GMP-AMP (cGAMP), a messenger produced by CGAS in response to DNA in the cytosol. Following cGAMP-binding, promotes the formation of autophagosomes, leading to target cytosolic DNA for degradation by the lysosome. Exhibits guanine base-specific ligand recognition. Binds 3'-3'linked cGAMP, 2'-3' linked cGAMP and 3'-3' linked c-di-GMP with much greater affinity as compared to 3'-3' linked c-di-AMP. Lacks the C-terminal tail (CTT) found in mammalian orthologs which is essential for interferon signaling. This Nematostella vectensis (Starlet sea anemone) protein is Stimulator of interferon genes protein.